Consider the following 378-residue polypeptide: Glutamate 5-kinase (378 aa).

Residue K14 participates in ATP binding. Residues S54, D141, and N153 each contribute to the substrate site. ATP is bound at residue S173–D174. Residues A279 to D356 form the PUA domain.

Belongs to the glutamate 5-kinase family.

The protein localises to the cytoplasm. The enzyme catalyses L-glutamate + ATP = L-glutamyl 5-phosphate + ADP. Its pathway is amino-acid biosynthesis; L-proline biosynthesis; L-glutamate 5-semialdehyde from L-glutamate: step 1/2. Its function is as follows. Catalyzes the transfer of a phosphate group to glutamate to form L-glutamate 5-phosphate. The chain is Glutamate 5-kinase from Brucella abortus (strain S19).